We begin with the raw amino-acid sequence, 211 residues long: MDNLSSEEIQQRAHQITDESLESTRRILGLAIESQDAGIKTITMLDEQKEQLNRIEEGLDQINKDMRETEKTLTELNKCCGLCVCPCNRTKNFESGKAYKTTWGDGGENSPCNVVSKQPGPVTNGQLQQPTTGAASGGYIKRITNDAREDEMEENLTQVGSILGNLKDMALNIGNEIDAQNPQIKRITDKADTNRDRIDIANARAKKLIDS.

The residue at position 1 (M1) is an N-acetylmethionine. S5, S6, S20, S23, and S34 each carry phosphoserine. The 63-residue stretch at 14 to 76 folds into the t-SNARE coiled-coil homology 1 domain; that stretch reads HQITDESLES…RETEKTLTEL (63 aa). Residues 23-76 are a coiled coil; that stretch reads STRRILGLAIESQDAGIKTITMLDEQKEQLNRIEEGLDQINKDMRETEKTLTEL. S-palmitoyl cysteine attachment occurs at residues C79, C80, C83, C85, and C87. The residue at position 110 (S110) is a Phosphoserine. The S-palmitoyl cysteine moiety is linked to residue C112. The 63-residue stretch at 146–208 folds into the t-SNARE coiled-coil homology 2 domain; it reads DAREDEMEEN…DIANARAKKL (63 aa). A Phosphoserine modification is found at S161.

Belongs to the SNAP-25 family. As to quaternary structure, homotetramer (via coiled-coil domain), also forms heterotetramers with STX4 and VAMP3. Found in a complex with VAMP8 and STX1A. Found in a complex with VAMP8 and STX4 in pancreas. Interacts simultaneously with SNAPIN and SYN4. Interacts with STX1A. Interacts with STX12. Interacts tightly to multiple syntaxins and synaptobrevins/VAMPs. Interacts with ZDHHC13 (via ANK repeats). Interacts with ZDHHC17 (via ANK repeats). As to expression, ubiquitous. Highest levels where found in placenta.

The protein localises to the cell membrane. Its subcellular location is the synapse. It is found in the synaptosome. Functionally, essential component of the high affinity receptor for the general membrane fusion machinery and an important regulator of transport vesicle docking and fusion. The chain is Synaptosomal-associated protein 23 (SNAP23) from Homo sapiens (Human).